The following is a 602-amino-acid chain: Elongation factor 4 (602 aa).

The region spanning 6–188 is the tr-type G domain; the sequence is KYIRNFCIIA…AIIRRVPPPR (183 aa). GTP-binding positions include 18-23 and 135-138; these read DHGKST and NKID.

It belongs to the TRAFAC class translation factor GTPase superfamily. Classic translation factor GTPase family. LepA subfamily.

The protein resides in the cell membrane. It carries out the reaction GTP + H2O = GDP + phosphate + H(+). In terms of biological role, required for accurate and efficient protein synthesis under certain stress conditions. May act as a fidelity factor of the translation reaction, by catalyzing a one-codon backward translocation of tRNAs on improperly translocated ribosomes. Back-translocation proceeds from a post-translocation (POST) complex to a pre-translocation (PRE) complex, thus giving elongation factor G a second chance to translocate the tRNAs correctly. Binds to ribosomes in a GTP-dependent manner. This Moorella thermoacetica (strain ATCC 39073 / JCM 9320) protein is Elongation factor 4.